The primary structure comprises 146 residues: Holo-[acyl-carrier-protein] synthase (146 aa).

Mg(2+) contacts are provided by Asp-8 and Glu-61.

The protein belongs to the P-Pant transferase superfamily. AcpS family. Mg(2+) serves as cofactor.

Its subcellular location is the cytoplasm. The enzyme catalyses apo-[ACP] + CoA = holo-[ACP] + adenosine 3',5'-bisphosphate + H(+). Transfers the 4'-phosphopantetheine moiety from coenzyme A to a Ser of acyl-carrier-protein. The sequence is that of Holo-[acyl-carrier-protein] synthase from Rhodopseudomonas palustris (strain ATCC BAA-98 / CGA009).